A 358-amino-acid chain; its full sequence is Photosystem II protein D1 2 (358 aa).

A run of 3 helical transmembrane segments spans residues Tyr-28–Ile-45, His-117–Leu-132, and Trp-141–Ala-155. His-117 contributes to the chlorophyll a binding site. Position 125 (Tyr-125) interacts with pheophytin a. Residues Asp-169 and Glu-188 each contribute to the [CaMn4O5] cluster site. A helical transmembrane segment spans residues Phe-196 to Leu-217. His-197 contributes to the chlorophyll a binding site. Residues His-214 and Ser-263 to Phe-264 contribute to the a quinone site. Residue His-214 coordinates Fe cation. Residue His-271 coordinates Fe cation. Residues Phe-273–Met-287 traverse the membrane as a helical segment. [CaMn4O5] cluster contacts are provided by His-331, Glu-332, Asp-341, and Ala-343. A propeptide spanning residues Thr-344–Gly-358 is cleaved from the precursor.

This sequence belongs to the reaction center PufL/M/PsbA/D family. In terms of assembly, PSII is composed of 1 copy each of membrane proteins PsbA, PsbB, PsbC, PsbD, PsbE, PsbF, PsbH, PsbI, PsbJ, PsbK, PsbL, PsbM, PsbT, PsbX, PsbY, PsbZ, Psb30/Ycf12, peripheral proteins PsbO, CyanoQ (PsbQ), PsbU, PsbV and a large number of cofactors. It forms dimeric complexes. The cofactor is The D1/D2 heterodimer binds P680, chlorophylls that are the primary electron donor of PSII, and subsequent electron acceptors. It shares a non-heme iron and each subunit binds pheophytin, quinone, additional chlorophylls, carotenoids and lipids. D1 provides most of the ligands for the Mn4-Ca-O5 cluster of the oxygen-evolving complex (OEC). There is also a Cl(-1) ion associated with D1 and D2, which is required for oxygen evolution. The PSII complex binds additional chlorophylls, carotenoids and specific lipids.. Tyr-160 forms a radical intermediate that is referred to as redox-active TyrZ, YZ or Y-Z. Post-translationally, C-terminally processed by CtpA; processing is essential to allow assembly of the oxygen-evolving complex and thus photosynthetic growth.

It localises to the cellular thylakoid membrane. It carries out the reaction 2 a plastoquinone + 4 hnu + 2 H2O = 2 a plastoquinol + O2. Its function is as follows. Photosystem II (PSII) is a light-driven water:plastoquinone oxidoreductase that uses light energy to abstract electrons from H(2)O, generating O(2) and a proton gradient subsequently used for ATP formation. It consists of a core antenna complex that captures photons, and an electron transfer chain that converts photonic excitation into a charge separation. The D1/D2 (PsbA/PsbD) reaction center heterodimer binds P680, the primary electron donor of PSII as well as several subsequent electron acceptors. The chain is Photosystem II protein D1 2 from Parasynechococcus marenigrum (strain WH8102).